The chain runs to 150 residues: Large ribosomal subunit protein bL9 (150 aa).

Belongs to the bacterial ribosomal protein bL9 family.

In terms of biological role, binds to the 23S rRNA. This Shewanella sp. (strain MR-4) protein is Large ribosomal subunit protein bL9.